Here is a 195-residue protein sequence, read N- to C-terminus: Small ribosomal subunit protein uS5 (195 aa).

Residues 1–20 (MAREREGGGRGRREDREERD) form a disordered region. Residues 23 to 86 (FVDKLVHINR…EAAKRGLIRV (64 aa)) enclose the S5 DRBM domain. Residues 161–195 (DSPRSVAARRGIKVSTLQSRRRDADPADQSEAAVA) are disordered.

It belongs to the universal ribosomal protein uS5 family. In terms of assembly, part of the 30S ribosomal subunit. Contacts proteins S4 and S8.

Its function is as follows. With S4 and S12 plays an important role in translational accuracy. Located at the back of the 30S subunit body where it stabilizes the conformation of the head with respect to the body. In Methylobacterium radiotolerans (strain ATCC 27329 / DSM 1819 / JCM 2831 / NBRC 15690 / NCIMB 10815 / 0-1), this protein is Small ribosomal subunit protein uS5.